Consider the following 505-residue polypeptide: GMP synthase [glutamine-hydrolyzing] (505 aa).

In terms of domain architecture, Glutamine amidotransferase type-1 spans 2-190; the sequence is SVVILDFGSQ…FLEICGVARD (189 aa). The active-site Nucleophile is the Cys-79. Residues His-165 and Glu-167 contribute to the active site. One can recognise a GMPS ATP-PPase domain in the interval 191-380; the sequence is WNAEHIVDEL…LGLPDAIRMR (190 aa). 218-224 is a binding site for ATP; the sequence is SGGVDSS.

In terms of assembly, homodimer.

It carries out the reaction XMP + L-glutamine + ATP + H2O = GMP + L-glutamate + AMP + diphosphate + 2 H(+). The protein operates within purine metabolism; GMP biosynthesis; GMP from XMP (L-Gln route): step 1/1. Its function is as follows. Catalyzes the synthesis of GMP from XMP. In Deinococcus geothermalis (strain DSM 11300 / CIP 105573 / AG-3a), this protein is GMP synthase [glutamine-hydrolyzing].